The primary structure comprises 275 residues: Ribosomal RNA small subunit methyltransferase A (275 aa).

S-adenosyl-L-methionine contacts are provided by N20, L22, G47, E68, D90, and N110.

Belongs to the class I-like SAM-binding methyltransferase superfamily. rRNA adenine N(6)-methyltransferase family. RsmA subfamily.

It localises to the cytoplasm. It catalyses the reaction adenosine(1518)/adenosine(1519) in 16S rRNA + 4 S-adenosyl-L-methionine = N(6)-dimethyladenosine(1518)/N(6)-dimethyladenosine(1519) in 16S rRNA + 4 S-adenosyl-L-homocysteine + 4 H(+). In terms of biological role, specifically dimethylates two adjacent adenosines (A1518 and A1519) in the loop of a conserved hairpin near the 3'-end of 16S rRNA in the 30S particle. May play a critical role in biogenesis of 30S subunits. This is Ribosomal RNA small subunit methyltransferase A from Chlorobaculum tepidum (strain ATCC 49652 / DSM 12025 / NBRC 103806 / TLS) (Chlorobium tepidum).